A 709-amino-acid chain; its full sequence is Polyribonucleotide nucleotidyltransferase (709 aa).

Mg(2+)-binding residues include Asp485 and Asp491. A KH domain is found at 552 to 611 (PRIYTMKIDPKKIKDVIGKGGATIRSLTEETGTSIDIDDDGTVKIAAVDSNAAKNVMGRI). The region spanning 621 to 689 (GAIYKGKVTR…RQGRIRLTMK (69 aa)) is the S1 motif domain.

This sequence belongs to the polyribonucleotide nucleotidyltransferase family. In terms of assembly, component of the RNA degradosome, which is a multiprotein complex involved in RNA processing and mRNA degradation. Mg(2+) serves as cofactor.

It localises to the cytoplasm. It carries out the reaction RNA(n+1) + phosphate = RNA(n) + a ribonucleoside 5'-diphosphate. Involved in mRNA degradation. Catalyzes the phosphorolysis of single-stranded polyribonucleotides processively in the 3'- to 5'-direction. The sequence is that of Polyribonucleotide nucleotidyltransferase from Haemophilus influenzae (strain PittEE).